Consider the following 180-residue polypeptide: Large ribosomal subunit protein uL5 (180 aa).

This sequence belongs to the universal ribosomal protein uL5 family. In terms of assembly, part of the 50S ribosomal subunit; part of the 5S rRNA/L5/L18/L25 subcomplex. Contacts the 5S rRNA and the P site tRNA. Forms a bridge to the 30S subunit in the 70S ribosome.

In terms of biological role, this is one of the proteins that bind and probably mediate the attachment of the 5S RNA into the large ribosomal subunit, where it forms part of the central protuberance. In the 70S ribosome it contacts protein S13 of the 30S subunit (bridge B1b), connecting the 2 subunits; this bridge is implicated in subunit movement. Contacts the P site tRNA; the 5S rRNA and some of its associated proteins might help stabilize positioning of ribosome-bound tRNAs. The sequence is that of Large ribosomal subunit protein uL5 from Streptococcus pneumoniae (strain JJA).